Consider the following 239-residue polypeptide: uncharacterized protein (239 aa).

The signal sequence occupies residues 1-23 (MKTMVAMLLAAVGVAVSASSTLA). The span at 220 to 230 (AHPKQTLRDQR) shows a compositional bias: basic and acidic residues. The interval 220–239 (AHPKQTLRDQRPAGGDEITK) is disordered.

This is an uncharacterized protein from Sinorhizobium fredii (strain NBRC 101917 / NGR234).